Reading from the N-terminus, the 218-residue chain is Probable septum site-determining protein MinC (218 aa).

It belongs to the MinC family. As to quaternary structure, interacts with MinD and FtsZ.

Functionally, cell division inhibitor that blocks the formation of polar Z ring septums. Rapidly oscillates between the poles of the cell to destabilize FtsZ filaments that have formed before they mature into polar Z rings. Prevents FtsZ polymerization. The protein is Probable septum site-determining protein MinC of Kosmotoga olearia (strain ATCC BAA-1733 / DSM 21960 / TBF 19.5.1).